We begin with the raw amino-acid sequence, 232 residues long: 2,3,4,5-tetrahydropyridine-2,6-dicarboxylate N-acetyltransferase (232 aa).

This sequence belongs to the transferase hexapeptide repeat family. DapH subfamily.

It carries out the reaction (S)-2,3,4,5-tetrahydrodipicolinate + acetyl-CoA + H2O = L-2-acetamido-6-oxoheptanedioate + CoA. Its pathway is amino-acid biosynthesis; L-lysine biosynthesis via DAP pathway; LL-2,6-diaminopimelate from (S)-tetrahydrodipicolinate (acetylase route): step 1/3. In terms of biological role, catalyzes the transfer of an acetyl group from acetyl-CoA to tetrahydrodipicolinate. The sequence is that of 2,3,4,5-tetrahydropyridine-2,6-dicarboxylate N-acetyltransferase from Streptococcus sanguinis (strain SK36).